A 285-amino-acid polypeptide reads, in one-letter code: CCR4-NOT transcription complex subunit 7 (285 aa).

A divalent metal cation-binding residues include aspartate 40, glutamate 42, aspartate 161, aspartate 230, and glutamate 278.

Belongs to the CAF1 family. As to quaternary structure, component of the CCR4-NOT complex. Mn(2+) is required as a cofactor. Mg(2+) serves as cofactor. The cofactor is Co(2+).

The protein resides in the nucleus. It is found in the cytoplasm. The catalysed reaction is Exonucleolytic cleavage of poly(A) to 5'-AMP.. Functionally, has 3'-5' poly(A) exoribonuclease activity for synthetic poly(A) RNA substrate. Catalytic component of the CCR4-NOT complex which is one of the major cellular mRNA deadenylases and is linked to various cellular processes including bulk mRNA degradation, miRNA-mediated repression, translational repression during translational initiation and general transcription regulation. During miRNA-mediated repression the complex also seems to act as translational repressor during translational initiation. Additional complex functions may be a consequence of its influence on mRNA expression. The protein is CCR4-NOT transcription complex subunit 7 (CNOT7) of Gallus gallus (Chicken).